The primary structure comprises 254 residues: Decaprenylphosphoryl-2-keto-beta-D-erythro-pentose reductase (254 aa).

Aspartate 67 is a binding site for NAD(+). Tyrosine 160 acts as the Proton acceptor in catalysis. Position 164 (lysine 164) interacts with NAD(+).

Belongs to the short-chain dehydrogenases/reductases (SDR) family. In terms of assembly, interacts with DprE1 to form an epimerase complex.

It is found in the periplasm. It catalyses the reaction trans,octa-cis-decaprenylphospho-beta-D-arabinofuranose + NAD(+) = trans,octa-cis-decaprenylphospho-beta-D-erythro-pentofuranosid-2-ulose + NADH + H(+). The protein operates within cell wall biogenesis; cell wall polysaccharide biosynthesis. Functionally, component of the DprE1-DprE2 complex that catalyzes the 2-step epimerization of decaprenyl-phospho-ribose (DPR) to decaprenyl-phospho-arabinose (DPA), a key precursor that serves as the arabinose donor required for the synthesis of cell-wall arabinans. DprE1 catalyzes the first step of epimerization, namely FAD-dependent oxidation of the C2' hydroxyl of DPR to yield the keto intermediate decaprenyl-phospho-2'-keto-D-arabinose (DPX). The intermediate DPX is then transferred to DprE2 subunit of the epimerase complex, most probably through a 'substrate channel' at the interface of DprE1-DprE2 complex. DprE2 then catalyzes the second step of epimerization, the NAD(+)-dependent reduction of DPX that leads to the formation of DPA. The chain is Decaprenylphosphoryl-2-keto-beta-D-erythro-pentose reductase from Mycolicibacterium smegmatis (strain ATCC 700084 / mc(2)155) (Mycobacterium smegmatis).